A 157-amino-acid chain; its full sequence is Nascent polypeptide-associated complex subunit beta (157 aa).

The disordered stretch occupies residues 1-31 (MPVDPEKLAKLQKSTAKKVGGSRVKAKKGVK). The 66-residue stretch at 33-98 (EQDDTKLIET…PQEKNITQLI (66 aa)) folds into the NAC-A/B domain. The interval 125–157 (NPKDFGAAGEAGATEEANEDIPDLVDQKFDDVE) is disordered. Over residues 130-139 (GAAGEAGATE) the composition is skewed to low complexity.

Belongs to the NAC-beta family. Part of the nascent polypeptide-associated complex (NAC), consisting of EGD2 and EGD1. NAC associates with ribosomes via EGD1.

The protein localises to the cytoplasm. It localises to the nucleus. Component of the nascent polypeptide-associated complex (NAC), a dynamic component of the ribosomal exit tunnel, protecting the emerging polypeptides from interaction with other cytoplasmic proteins to ensure appropriate nascent protein targeting. The NAC complex also promotes mitochondrial protein import by enhancing productive ribosome interactions with the outer mitochondrial membrane and blocks the inappropriate interaction of ribosomes translating non-secretory nascent polypeptides with translocation sites in the membrane of the endoplasmic reticulum. EGD1 may act as a transcription factor that exert a negative effect on the expression of several genes that are transcribed by RNA polymerase II. The protein is Nascent polypeptide-associated complex subunit beta (EGD1) of Lodderomyces elongisporus (strain ATCC 11503 / CBS 2605 / JCM 1781 / NBRC 1676 / NRRL YB-4239) (Yeast).